The following is a 373-amino-acid chain: Glutamate 5-kinase 2 (373 aa).

Lys-11 provides a ligand contact to ATP. The substrate site is built by Ser-51, Asp-138, and Asn-150. Residues Ser-170 to Asp-171 and Thr-212 to Lys-218 each bind ATP. The PUA domain occupies Glu-279–Gln-355.

The protein belongs to the glutamate 5-kinase family.

The protein localises to the cytoplasm. It catalyses the reaction L-glutamate + ATP = L-glutamyl 5-phosphate + ADP. It functions in the pathway amino-acid biosynthesis; L-proline biosynthesis; L-glutamate 5-semialdehyde from L-glutamate: step 1/2. Catalyzes the transfer of a phosphate group to glutamate to form L-glutamate 5-phosphate. The chain is Glutamate 5-kinase 2 from Bacillus licheniformis (strain ATCC 14580 / DSM 13 / JCM 2505 / CCUG 7422 / NBRC 12200 / NCIMB 9375 / NCTC 10341 / NRRL NRS-1264 / Gibson 46).